The following is a 190-amino-acid chain: Threonylcarbamoyl-AMP synthase (190 aa).

The 184-residue stretch at S7–G190 folds into the YrdC-like domain.

Belongs to the SUA5 family. TsaC subfamily.

Its subcellular location is the cytoplasm. The enzyme catalyses L-threonine + hydrogencarbonate + ATP = L-threonylcarbamoyladenylate + diphosphate + H2O. In terms of biological role, required for the formation of a threonylcarbamoyl group on adenosine at position 37 (t(6)A37) in tRNAs that read codons beginning with adenine. Catalyzes the conversion of L-threonine, HCO(3)(-)/CO(2) and ATP to give threonylcarbamoyl-AMP (TC-AMP) as the acyladenylate intermediate, with the release of diphosphate. The protein is Threonylcarbamoyl-AMP synthase of Sodalis glossinidius (strain morsitans).